The primary structure comprises 175 residues: Mitochondrial inner membrane protease subunit 2 (175 aa).

The chain crosses the membrane as a helical span at residues Phe-19–Ala-37. Residues Ser-43 and Lys-91 contribute to the active site.

It belongs to the peptidase S26 family. IMP2 subfamily. Heterodimer of 2 subunits, IMMPL1 and IMMPL2.

It is found in the mitochondrion inner membrane. Catalyzes the removal of transit peptides required for the targeting of proteins from the mitochondrial matrix, across the inner membrane, into the inter-membrane space. Known to process the nuclear encoded protein DIABLO. The polypeptide is Mitochondrial inner membrane protease subunit 2 (Immp2l) (Mus musculus (Mouse)).